The chain runs to 349 residues: GTP 3',8-cyclase (349 aa).

In terms of domain architecture, Radical SAM core spans 26–245; that stretch reads GFGRAVTYLR…SSFWTLTDIP (220 aa). Arg-35 is a binding site for GTP. [4Fe-4S] cluster is bound by residues Cys-42 and Cys-46. Tyr-48 is a binding site for S-adenosyl-L-methionine. Position 49 (Cys-49) interacts with [4Fe-4S] cluster. A GTP-binding site is contributed by Arg-84. Gly-88 lines the S-adenosyl-L-methionine pocket. Thr-118 is a GTP binding site. Ser-142 contacts S-adenosyl-L-methionine. Residue Lys-178 coordinates GTP. Met-212 serves as a coordination point for S-adenosyl-L-methionine. Positions 275 and 278 each coordinate [4Fe-4S] cluster. 280–282 contributes to the GTP binding site; sequence RVR. Cys-292 lines the [4Fe-4S] cluster pocket.

Belongs to the radical SAM superfamily. MoaA family. As to quaternary structure, monomer and homodimer. The cofactor is [4Fe-4S] cluster.

It carries out the reaction GTP + AH2 + S-adenosyl-L-methionine = (8S)-3',8-cyclo-7,8-dihydroguanosine 5'-triphosphate + 5'-deoxyadenosine + L-methionine + A + H(+). It participates in cofactor biosynthesis; molybdopterin biosynthesis. Its function is as follows. Catalyzes the cyclization of GTP to (8S)-3',8-cyclo-7,8-dihydroguanosine 5'-triphosphate. This Caulobacter vibrioides (strain ATCC 19089 / CIP 103742 / CB 15) (Caulobacter crescentus) protein is GTP 3',8-cyclase.